The following is a 662-amino-acid chain: UvrABC system protein B (662 aa).

In terms of domain architecture, Helicase ATP-binding spans 25 to 182; the sequence is KGIEKGEKFQ…KKLVEIQYER (158 aa). 38–45 contacts ATP; that stretch reads GVTGSGKT. A Beta-hairpin motif is present at residues 91-114; sequence YYDYYQPEAYVAQSDTYIEKDASI. Positions 429-595 constitute a Helicase C-terminal domain; the sequence is QIDDLYTSIQ…TIIKDIREVI (167 aa). The UVR domain occupies 622–657; that stretch reads DKLIEKYEEEMKEAAQNLQFEKAAHLRDVIYKLKRD.

This sequence belongs to the UvrB family. Forms a heterotetramer with UvrA during the search for lesions. Interacts with UvrC in an incision complex.

The protein localises to the cytoplasm. The UvrABC repair system catalyzes the recognition and processing of DNA lesions. A damage recognition complex composed of 2 UvrA and 2 UvrB subunits scans DNA for abnormalities. Upon binding of the UvrA(2)B(2) complex to a putative damaged site, the DNA wraps around one UvrB monomer. DNA wrap is dependent on ATP binding by UvrB and probably causes local melting of the DNA helix, facilitating insertion of UvrB beta-hairpin between the DNA strands. Then UvrB probes one DNA strand for the presence of a lesion. If a lesion is found the UvrA subunits dissociate and the UvrB-DNA preincision complex is formed. This complex is subsequently bound by UvrC and the second UvrB is released. If no lesion is found, the DNA wraps around the other UvrB subunit that will check the other stand for damage. In Clostridium botulinum (strain Loch Maree / Type A3), this protein is UvrABC system protein B.